The chain runs to 754 residues: Exocyst complex component EXO84A (754 aa).

2 disordered regions span residues 514–540 (RILP…EQRE) and 734–754 (GHGE…YTSN). The segment covering 518–527 (QGTSQSTPRR) has biased composition (polar residues). Over residues 528–540 (GSSDRQNRPEQRE) the composition is skewed to basic and acidic residues. Polar residues predominate over residues 741 to 754 (TSPSVSSAKSYTSN).

This sequence belongs to the EXO84 family. In terms of assembly, the exocyst complex is composed of SEC3, SEC5, SEC6, SEC8, SEC10, EXO70A1 and EXO84.

Component of the exocyst complex involved in the docking of exocytic vesicles with fusion sites on the plasma membrane during regulated or polarized secretion. Involved in polarized cell growth and organ morphogenesis. During cytokinesis, involved in cell plate initiation, cell plate maturation and formation of new primary cell wall. The polypeptide is Exocyst complex component EXO84A (EXO84A) (Arabidopsis thaliana (Mouse-ear cress)).